Reading from the N-terminus, the 305-residue chain is LysM and putative peptidoglycan-binding domain-containing protein 3 (305 aa).

The Extracellular portion of the chain corresponds to 1–216 (MAGRNQNRTV…PYYGADWGIG (216 aa)). 2 N-linked (GlcNAc...) asparagine glycosylation sites follow: Asn-7 and Asn-26. The residue at position 55 (Ser-55) is a Phosphoserine. In terms of domain architecture, LysM spans 65–109 (LTKDIQEGDTLNAVALQYCCTVADIKRVNNLISDQDFFALRSIKI). Asn-199 carries N-linked (GlcNAc...) asparagine glycosylation. Residues 217–237 (WWTAVVIMLIVGIITPVFYLL) traverse the membrane as a helical segment. Over 238-305 (YYEILAKVDV…PQAHDAQHKT (68 aa)) the chain is Cytoplasmic. Residues 253–305 (VGSSHLHPGLTPPTQHREMENEIGPTKGIPVGQQDDHKLYRQDPQAHDAQHKT) form a disordered region. Positions 286-305 (QDDHKLYRQDPQAHDAQHKT) are enriched in basic and acidic residues.

It is found in the cell membrane. It localises to the golgi apparatus. In terms of biological role, essential for Golgi structural integrity. This is LysM and putative peptidoglycan-binding domain-containing protein 3 (Lysmd3) from Mus musculus (Mouse).